The chain runs to 540 residues: Chaperonin GroEL (540 aa).

ATP-binding positions include 29–32 (TLGP), 86–90 (DGTTT), glycine 413, 476–478 (NAA), and aspartate 492.

The protein belongs to the chaperonin (HSP60) family. In terms of assembly, forms a cylinder of 14 subunits composed of two heptameric rings stacked back-to-back. Interacts with the co-chaperonin GroES.

It is found in the cytoplasm. It carries out the reaction ATP + H2O + a folded polypeptide = ADP + phosphate + an unfolded polypeptide.. In terms of biological role, together with its co-chaperonin GroES, plays an essential role in assisting protein folding. The GroEL-GroES system forms a nano-cage that allows encapsulation of the non-native substrate proteins and provides a physical environment optimized to promote and accelerate protein folding. In Streptococcus constellatus, this protein is Chaperonin GroEL.